Consider the following 876-residue polypeptide: Protein argonaute 17 (876 aa).

The PAZ domain occupies 246–338 (PVVDYVAQLL…LPLEVCKIAE (93 aa)). The Piwi domain occupies 514–834 (LLIVILPNNN…LSSRARCYIK (321 aa)). The disordered stretch occupies residues 839 to 859 (GDSTSHTSLPSEEDSSAASET).

It belongs to the argonaute family. Ago subfamily.

In terms of biological role, probably involved in the RNA silencing pathway. May bind to short RNAs such as microRNAs (miRNAs) or short interfering RNAs (siRNAs), and represses the translation of mRNAs which are complementary to them. This chain is Protein argonaute 17 (AGO17), found in Oryza sativa subsp. japonica (Rice).